The sequence spans 169 residues: Succinate dehydrogenase cytochrome b560 subunit, mitochondrial (169 aa).

Residues 1 to 29 constitute a mitochondrion transit peptide; the sequence is MAALLLRHVGRHCLRAHLSPQLCIRNAVP. Residues 30–62 are Mitochondrial matrix-facing; it reads LGTTAKEEMERFWNKNLGSNRPLSPHITIYRWS. A helical membrane pass occupies residues 63 to 92; that stretch reads LPMAMSICHRGTGIALSAGVSLFGLSALLL. Residues 93–112 lie on the Mitochondrial intermembrane side of the membrane; the sequence is PGNFESHLELVKSLCLGPTL. Residues 113 to 137 form a helical membrane-spanning segment; the sequence is IYTAKFGIVFPLMYHTWNGIRHLIW. Histidine 127 lines the heme b pocket. At 138–144 the chain is on the mitochondrial matrix side; sequence DLGKGLT. A helical membrane pass occupies residues 145-166; that stretch reads IPQLTQSGVVVLILTVLSSVGL. The Mitochondrial intermembrane segment spans residues 167–169; it reads AAM.

It belongs to the cytochrome b560 family. As to quaternary structure, component of complex II composed of four subunits: the flavoprotein (FP) SDHA, iron-sulfur protein (IP) SDHB, and a cytochrome b560 composed of SDHC and SDHD. Heme b serves as cofactor. Detected in heart muscle (at protein level).

It localises to the mitochondrion inner membrane. It participates in carbohydrate metabolism; tricarboxylic acid cycle. Functionally, membrane-anchoring subunit of succinate dehydrogenase (SDH) that is involved in complex II of the mitochondrial electron transport chain and is responsible for transferring electrons from succinate to ubiquinone (coenzyme Q). SDH also oxidizes malate to the non-canonical enol form of oxaloacetate, enol-oxaloacetate. Enol-oxaloacetate, which is a potent inhibitor of the succinate dehydrogenase activity, is further isomerized into keto-oxaloacetate. This is Succinate dehydrogenase cytochrome b560 subunit, mitochondrial (SDHC) from Sus scrofa (Pig).